Here is a 258-residue protein sequence, read N- to C-terminus: UPF0246 protein CKO_03380 (258 aa).

It belongs to the UPF0246 family.

This Citrobacter koseri (strain ATCC BAA-895 / CDC 4225-83 / SGSC4696) protein is UPF0246 protein CKO_03380.